The following is a 296-amino-acid chain: Urease accessory protein UreD (296 aa).

Belongs to the UreD family. In terms of assembly, ureD, UreF and UreG form a complex that acts as a GTP-hydrolysis-dependent molecular chaperone, activating the urease apoprotein by helping to assemble the nickel containing metallocenter of UreC. The UreE protein probably delivers the nickel.

The protein resides in the cytoplasm. In terms of biological role, required for maturation of urease via the functional incorporation of the urease nickel metallocenter. This is Urease accessory protein UreD from Janthinobacterium sp. (strain Marseille) (Minibacterium massiliensis).